Consider the following 464-residue polypeptide: Vitamin D3 hydroxylase-associated protein (464 aa).

Catalysis depends on charge relay system residues lysine 150 and serine 225. The active-site Acyl-ester intermediate is the serine 249.

It belongs to the amidase family. In terms of tissue distribution, kidney.

The protein localises to the mitochondrion inner membrane. May have a vitamin D3 hydroxylase regulatory function. The chain is Vitamin D3 hydroxylase-associated protein from Gallus gallus (Chicken).